A 526-amino-acid polypeptide reads, in one-letter code: uncharacterized protein (526 aa).

WD repeat units follow at residues 210 to 248 (SMEQ…HHDT) and 452 to 491 (SHNS…LIDS).

This is an uncharacterized protein from Acanthamoeba polyphaga mimivirus (APMV).